Reading from the N-terminus, the 120-residue chain is BLOC-1-related complex subunit 8 (120 aa).

A disordered region spans residues 101-120; the sequence is MNTSAQGHSQEKLSPPPSLA. A Phosphoserine modification is found at S109.

Belongs to the BORCS8 family. Component of the BLOC-one-related complex (BORC) which is composed of BLOC1S1, BLOC1S2, BORCS5, BORCS6, BORCS7, BORCS8, KXD1 and SNAPIN.

The protein localises to the lysosome membrane. Functionally, as part of the BLOC-one-related complex (BORC), it plays a role in the movement and localization of lysosomes at the cell periphery. Associated with the cytosolic face of lysosomes, BORC recruits ARL8B to the lysosomal membrane and couples lysosomes to microtubule plus-end-directed kinesin motors, driving lysosome movement toward the cell periphery. The protein is BLOC-1-related complex subunit 8 of Mus musculus (Mouse).